The primary structure comprises 132 residues: Small ribosomal subunit protein uS8 (132 aa).

It belongs to the universal ribosomal protein uS8 family. Part of the 30S ribosomal subunit. Contacts proteins S5 and S12.

Its function is as follows. One of the primary rRNA binding proteins, it binds directly to 16S rRNA central domain where it helps coordinate assembly of the platform of the 30S subunit. This chain is Small ribosomal subunit protein uS8, found in Shouchella clausii (strain KSM-K16) (Alkalihalobacillus clausii).